Here is a 129-residue protein sequence, read N- to C-terminus: Small ribosomal subunit protein uS11 (129 aa).

This sequence belongs to the universal ribosomal protein uS11 family. In terms of assembly, part of the 30S ribosomal subunit. Interacts with proteins S7 and S18. Binds to IF-3.

Functionally, located on the platform of the 30S subunit, it bridges several disparate RNA helices of the 16S rRNA. Forms part of the Shine-Dalgarno cleft in the 70S ribosome. The sequence is that of Small ribosomal subunit protein uS11 from Phenylobacterium zucineum (strain HLK1).